The following is a 249-amino-acid chain: Ribonuclease HII (249 aa).

Pro residues predominate over residues 1-19 (MAPRPKAPPQPAEPDPALP). Residues 1-31 (MAPRPKAPPQPAEPDPALPRPRGRPPKAGAV) are disordered. The RNase H type-2 domain occupies 52 to 240 (APVAGADEVG…VREQQLGLFP (189 aa)). A divalent metal cation is bound by residues Asp-58, Glu-59, and Asp-149.

The protein belongs to the RNase HII family. It depends on Mn(2+) as a cofactor. Requires Mg(2+) as cofactor.

It localises to the cytoplasm. The catalysed reaction is Endonucleolytic cleavage to 5'-phosphomonoester.. Its function is as follows. Endonuclease that specifically degrades the RNA of RNA-DNA hybrids. This Xanthobacter autotrophicus (strain ATCC BAA-1158 / Py2) protein is Ribonuclease HII.